A 423-amino-acid chain; its full sequence is Gamma-glutamyl phosphate reductase (423 aa).

This sequence belongs to the gamma-glutamyl phosphate reductase family.

It is found in the cytoplasm. The catalysed reaction is L-glutamate 5-semialdehyde + phosphate + NADP(+) = L-glutamyl 5-phosphate + NADPH + H(+). Its pathway is amino-acid biosynthesis; L-proline biosynthesis; L-glutamate 5-semialdehyde from L-glutamate: step 2/2. Catalyzes the NADPH-dependent reduction of L-glutamate 5-phosphate into L-glutamate 5-semialdehyde and phosphate. The product spontaneously undergoes cyclization to form 1-pyrroline-5-carboxylate. In Burkholderia lata (strain ATCC 17760 / DSM 23089 / LMG 22485 / NCIMB 9086 / R18194 / 383), this protein is Gamma-glutamyl phosphate reductase.